The primary structure comprises 265 residues: S-adenosylmethionine decarboxylase proenzyme (265 aa).

Residue Ser-114 is the Schiff-base intermediate with substrate; via pyruvic acid of the active site. Ser-114 is modified (pyruvic acid (Ser); by autocatalysis). His-119 serves as the catalytic Proton acceptor; for processing activity. Cys-142 acts as the Proton donor; for catalytic activity in catalysis.

Belongs to the prokaryotic AdoMetDC family. Type 2 subfamily. In terms of assembly, heterooctamer of four alpha and four beta chains arranged as a tetramer of alpha/beta heterodimers. The cofactor is pyruvate. Post-translationally, is synthesized initially as an inactive proenzyme. Formation of the active enzyme involves a self-maturation process in which the active site pyruvoyl group is generated from an internal serine residue via an autocatalytic post-translational modification. Two non-identical subunits are generated from the proenzyme in this reaction, and the pyruvate is formed at the N-terminus of the alpha chain, which is derived from the carboxyl end of the proenzyme. The post-translation cleavage follows an unusual pathway, termed non-hydrolytic serinolysis, in which the side chain hydroxyl group of the serine supplies its oxygen atom to form the C-terminus of the beta chain, while the remainder of the serine residue undergoes an oxidative deamination to produce ammonia and the pyruvoyl group blocking the N-terminus of the alpha chain.

The enzyme catalyses S-adenosyl-L-methionine + H(+) = S-adenosyl 3-(methylsulfanyl)propylamine + CO2. Its pathway is amine and polyamine biosynthesis; S-adenosylmethioninamine biosynthesis; S-adenosylmethioninamine from S-adenosyl-L-methionine: step 1/1. Catalyzes the decarboxylation of S-adenosylmethionine to S-adenosylmethioninamine (dcAdoMet), the propylamine donor required for the synthesis of the polyamines spermine and spermidine from the diamine putrescine. This Buchnera aphidicola subsp. Acyrthosiphon pisum (strain 5A) protein is S-adenosylmethionine decarboxylase proenzyme.